Consider the following 528-residue polypeptide: Poly(A) RNA polymerase GLD2 (528 aa).

Disordered regions lie at residues 1–41 and 99–121; these read MYPN…QPQQ and RDQS…KRRS. 2 stretches are compositionally biased toward low complexity: residues 16–32 and 102–113; these read PCEQ…EQPL and SPLISPASPSSS. Residues Asp259 and Asp261 each coordinate Mg(2+). One can recognise a PAP-associated domain in the interval 428-481; sequence LGDLLLGFLKYFAIEFDWSKDIISVREAKALPRSDDYEWRNKFICVEEPYDRTN.

This sequence belongs to the DNA polymerase type-B-like family. GLD2 subfamily. Component of a complex at least composed of cpeb1, cpsf1, tent2/gld2, pabpc1/ePAB, parn and sympk. Following oocyte maturation, parn is expelled from the complex. Interacts with rbm9 and sympk. It depends on Mg(2+) as a cofactor. The cofactor is Mn(2+).

The protein localises to the cytoplasm. The catalysed reaction is RNA(n) + ATP = RNA(n)-3'-adenine ribonucleotide + diphosphate. Functionally, cytoplasmic poly(A) RNA polymerase that adds successive AMP monomers to the 3'-end of specific RNAs, forming a poly(A) tail. In contrast to the canonical nuclear poly(A) RNA polymerase, it only adds poly(A) to selected cytoplasmic mRNAs during oocyte maturation. Plays a central role during oocyte maturation by mediating polyadenylation of dormant mRNAs, which contain 5'AAUAAA-3' sequence in their 3'-UTR. In immature oocytes, polyadenylation of poly(A) tails is counteracted by the ribonuclease parn. During maturation parn is excluded from the ribonucleoprotein complex, allowing poly(A) elongation and activation of mRNAs. May not play a role in replication-dependent histone mRNA degradation. This chain is Poly(A) RNA polymerase GLD2 (tent2), found in Xenopus tropicalis (Western clawed frog).